The primary structure comprises 464 residues: Gasdermin-A3 (464 aa).

The tract at residues 1-261 (MPVFEDVTRA…EEPEEEKLIG (261 aa)) is triggers pyroptosis. 9-13 (RALVR) lines the a cardiolipin pocket. 4 beta stranded membrane-spanning segments follow: residues 78–95 (NFSF…LVEV), 99–120 (VKVK…TLSV), 164–180 (VTVE…SLPS), and 184–198 (LGLQ…AVTI). Residues 255–327 (EEEKLIGEMH…DKGQKVTLEA (73 aa)) adopt a coiled-coil conformation.

The protein belongs to the gasdermin family. As to quaternary structure, homooligomer; homooligomeric ring-shaped pore complex containing 18-36 subunits when inserted in the membrane. Post-translationally, cleavage relieves autoinhibition by releasing the N-terminal moiety (Gasdermin-A3, N-terminal) that initiates pyroptosis. In contrast to Gsdma, not cleaved by bacterial effector protein SpeB. In terms of processing, palmitoylated. As to expression, highest levels in skin with weak expression in placenta and testis. Not detected in the gastrointestinal tract. In skin, expressed in postnatal hair follicles and epidermis as well as sebaceous gland basal cells.

The protein localises to the cytoplasm. The protein resides in the cytosol. It is found in the cell membrane. Its subcellular location is the mitochondrion membrane. Its activity is regulated as follows. The full-length protein before cleavage is inactive: intramolecular interactions between N- and C-terminal domains mediate autoinhibition in the absence of activation signal. The intrinsic pyroptosis-inducing activity is carried by the released N-terminal moiety (Gasdermin-A3, N-terminal). Precursor of a pore-forming protein involved in the transition from catagen to telogen at the end of hair follicle morphogenesis. This form constitutes the precursor of the pore: upon cleavage, the released N-terminal moiety (Gasdermin-A3, N-terminal) binds to membranes and forms pores, triggering pyroptosis. This form acts as a sensor of infection: activation is triggered by cleavage by some bacterial effector protein, which releases the N-terminal moiety (Gasdermin-A3, N-terminal). Its function is as follows. Pore-forming protein that causes membrane permeabilization and pyroptosis. Released upon cleavage by some bacterial effector protein, and binds to membrane inner leaflet lipids. Homooligomerizes within the membrane and forms pores of 10-15 nanometers (nm) of inner diameter, allowing the release of mature interleukin-1 (IL1B and IL18) and triggering pyroptosis. Binds to membrane inner leaflet lipids, including bisphosphorylated phosphatidylinositols, such as phosphatidylinositol (4,5)-bisphosphate, as well as phosphatidylinositol (3,4,5)-bisphosphate, and more weakly to monophosphorylated phosphatidylinositols. Also binds to bacterial and mitochondrial lipids, including cardiolipin, and exhibits bactericidal activity. Plays a role in the transition from catagen to telogen at the end of hair follicle morphogenesis, possibly by regulating hair follicle stem cell niche maintenance. Also required for mammary gland development. The protein is Gasdermin-A3 of Mus musculus (Mouse).